The chain runs to 309 residues: MILDNLFKNLIYDPVSALGILVFYILLVNLPISLGAVFKKKSFFIVKLLTILVNLLITLQLLFRWSISGHFPVSNLYESLYFLAWGISMGQLYIEREYSSPIIPSIAIPIELLTVAFACFVLPDDLKLSSNLVPALRSSWLVMHVSVVMLSYAALIIGSLLSASVLFINRNKPLQIRSSSTGIGGFKFFNNNYLNDLADPVEFSHSEELDTLSYRSILIGFVLLTLGLISGAVWANEAWGTWWSWDPKETWAFITWLFYAAYLHMRISKGWQGRRPALLATSGFLVVIVCYLGVNFLGIGLHSYGWIFG.

8 helical membrane passes run 18–38 (LGIL…GAVF), 43–63 (FFIV…QLLF), 67–87 (ISGH…AWGI), 102–122 (IIPS…CFVL), 148–168 (VMLS…VLFI), 216–236 (SILI…VWAN), 250–267 (TWAF…HMRI), and 279–299 (LATS…FLGI).

It belongs to the CcmF/CycK/Ccl1/NrfE/CcsA family. As to quaternary structure, may interact with ccs1.

Its subcellular location is the cellular thylakoid membrane. Its function is as follows. Required during biogenesis of c-type cytochromes (cytochrome c6 and cytochrome f) at the step of heme attachment. The polypeptide is Cytochrome c biogenesis protein CcsA (Prochlorococcus marinus (strain MIT 9312)).